The following is a 264-amino-acid chain: Hydroxyethylthiazole kinase (264 aa).

Residue Met-52 coordinates substrate. The ATP site is built by Arg-127 and Thr-173. Gly-200 lines the substrate pocket.

This sequence belongs to the Thz kinase family. Mg(2+) serves as cofactor.

It carries out the reaction 5-(2-hydroxyethyl)-4-methylthiazole + ATP = 4-methyl-5-(2-phosphooxyethyl)-thiazole + ADP + H(+). Its pathway is cofactor biosynthesis; thiamine diphosphate biosynthesis; 4-methyl-5-(2-phosphoethyl)-thiazole from 5-(2-hydroxyethyl)-4-methylthiazole: step 1/1. Its function is as follows. Catalyzes the phosphorylation of the hydroxyl group of 4-methyl-5-beta-hydroxyethylthiazole (THZ). This is Hydroxyethylthiazole kinase from Serratia proteamaculans (strain 568).